The sequence spans 557 residues: Arginine--tRNA ligase (557 aa).

The 'HIGH' region signature appears at 132-142 (ANPTGLLHMGN).

The protein belongs to the class-I aminoacyl-tRNA synthetase family. Monomer.

The protein localises to the cytoplasm. The catalysed reaction is tRNA(Arg) + L-arginine + ATP = L-arginyl-tRNA(Arg) + AMP + diphosphate. This chain is Arginine--tRNA ligase, found in Carboxydothermus hydrogenoformans (strain ATCC BAA-161 / DSM 6008 / Z-2901).